The following is a 98-amino-acid chain: NADH-ubiquinone oxidoreductase chain 4L (98 aa).

3 helical membrane-spanning segments follow: residues 1-21 (MSLV…GLLM), 29-49 (SLLC…LMIL), and 61-81 (IILL…LVMV).

It belongs to the complex I subunit 4L family. Core subunit of respiratory chain NADH dehydrogenase (Complex I) which is composed of 45 different subunits.

The protein localises to the mitochondrion inner membrane. It catalyses the reaction a ubiquinone + NADH + 5 H(+)(in) = a ubiquinol + NAD(+) + 4 H(+)(out). Core subunit of the mitochondrial membrane respiratory chain NADH dehydrogenase (Complex I) which catalyzes electron transfer from NADH through the respiratory chain, using ubiquinone as an electron acceptor. Part of the enzyme membrane arm which is embedded in the lipid bilayer and involved in proton translocation. The chain is NADH-ubiquinone oxidoreductase chain 4L (MT-ND4L) from Ovis aries (Sheep).